A 300-amino-acid chain; its full sequence is Ribosomal protein bS6--L-glutamate ligase (300 aa).

One can recognise an ATP-grasp domain in the interval 104–287 (MQLLARQGID…IAGKMIRWIE (184 aa)). Residues Lys141, 178-179 (EY), Asp187, and 211-213 (RSN) each bind ATP. Mg(2+) contacts are provided by Asp248, Glu260, and Asn262. 3 residues coordinate Mn(2+): Asp248, Glu260, and Asn262.

Belongs to the RimK family. Requires Mg(2+) as cofactor. It depends on Mn(2+) as a cofactor.

Its function is as follows. An L-glutamate ligase that catalyzes the ATP-dependent post-translational addition of glutamate residues to the C-terminus of ribosomal protein bS6 (RpsF). Is also able to catalyze the synthesis of poly-alpha-glutamate in vitro, via ATP hydrolysis from unprotected glutamate as substrate. The number of glutamate residues added to either RpsF or to poly-alpha-glutamate changes with pH. In Shigella dysenteriae serotype 1 (strain Sd197), this protein is Ribosomal protein bS6--L-glutamate ligase.